We begin with the raw amino-acid sequence, 666 residues long: Polyamine deacetylase HDAC10 (666 aa).

The segment at 1–323 (MGTALVYHED…VCMMVQTLLG (323 aa)) is histone deacetylase. H135 is an active-site residue.

The protein belongs to the histone deacetylase family. HD type 2 subfamily. As to quaternary structure, interacts with HDAC3. Interacts with HDAC2 and NCOR2/SMRT. Interacts with HSPA8/HSC70. Interacts with MSH2. In terms of tissue distribution, widely expressed.

The protein localises to the cytoplasm. Its subcellular location is the nucleus. The enzyme catalyses N(8)-acetylspermidine + H2O = spermidine + acetate. It carries out the reaction N-acetylputrescine + H2O = putrescine + acetate. It catalyses the reaction N-acetylcadaverine + H2O = cadaverine + acetate. The catalysed reaction is N(6)-acetyl-L-lysyl-[protein] + H2O = L-lysyl-[protein] + acetate. Its function is as follows. Polyamine deacetylase (PDAC), which acts preferentially on N(8)-acetylspermidine, and also on acetylcadaverine and acetylputrescine. Exhibits attenuated catalytic activity toward N(1),N(8)-diacetylspermidine and very low activity, if any, toward N(1)-acetylspermidine. Histone deacetylase activity has been observed in vitro. Has also been shown to be involved in MSH2 deacetylation. The physiological relevance of protein/histone deacetylase activity is unclear and could be very weak. May play a role in the promotion of late stages of autophagy, possibly autophagosome-lysosome fusion and/or lysosomal exocytosis in neuroblastoma cells. May play a role in homologous recombination. May promote DNA mismatch repair. The sequence is that of Polyamine deacetylase HDAC10 (Hdac10) from Mus musculus (Mouse).